We begin with the raw amino-acid sequence, 357 residues long: Peptide chain release factor 1 (357 aa).

An N5-methylglutamine modification is found at Q236.

The protein belongs to the prokaryotic/mitochondrial release factor family. Post-translationally, methylated by PrmC. Methylation increases the termination efficiency of RF1.

The protein localises to the cytoplasm. Its function is as follows. Peptide chain release factor 1 directs the termination of translation in response to the peptide chain termination codons UAG and UAA. The sequence is that of Peptide chain release factor 1 from Mycobacterium sp. (strain JLS).